The sequence spans 202 residues: Inner membrane-spanning protein YciB (202 aa).

Helical transmembrane passes span 3-23 (FFLDLLPVILFFVAYKFAGAA), 46-66 (ILIATAVAIAATLAQVLIVWL), 74-94 (MLWVSLAIITLFGGATLVFHN), 100-120 (WKPTVFYWTFAGALAVSALLF), 145-165 (LAWIGFFTLMGFLNLYVAYGY), and 173-193 (FKLFGAMGLMLAFFLGQGFYL).

This sequence belongs to the YciB family.

The protein resides in the cell inner membrane. In terms of biological role, plays a role in cell envelope biogenesis, maintenance of cell envelope integrity and membrane homeostasis. The sequence is that of Inner membrane-spanning protein YciB from Azoarcus sp. (strain BH72).